Consider the following 154-residue polypeptide: Ribonuclease H (154 aa).

Residues 5–146 (EQNIVYLYCD…ADELANRGID (142 aa)) enclose the RNase H type-1 domain. 4 residues coordinate Mg(2+): D14, E52, D74, and D138.

It belongs to the RNase H family. As to quaternary structure, monomer. The cofactor is Mg(2+).

The protein resides in the cytoplasm. It catalyses the reaction Endonucleolytic cleavage to 5'-phosphomonoester.. Endonuclease that specifically degrades the RNA of RNA-DNA hybrids. In Coxiella burnetii (strain RSA 331 / Henzerling II), this protein is Ribonuclease H.